Here is a 66-residue protein sequence, read N- to C-terminus: Large ribosomal subunit protein uL29 (66 aa).

This sequence belongs to the universal ribosomal protein uL29 family.

The chain is Large ribosomal subunit protein uL29 from Nitrosococcus oceani (strain ATCC 19707 / BCRC 17464 / JCM 30415 / NCIMB 11848 / C-107).